Consider the following 143-residue polypeptide: Large ribosomal subunit protein uL11 (143 aa).

The protein belongs to the universal ribosomal protein uL11 family. As to quaternary structure, part of the ribosomal stalk of the 50S ribosomal subunit. Interacts with L10 and the large rRNA to form the base of the stalk. L10 forms an elongated spine to which L12 dimers bind in a sequential fashion forming a multimeric L10(L12)X complex. In terms of processing, one or more lysine residues are methylated.

Forms part of the ribosomal stalk which helps the ribosome interact with GTP-bound translation factors. This chain is Large ribosomal subunit protein uL11, found in Bordetella parapertussis (strain 12822 / ATCC BAA-587 / NCTC 13253).